Here is a 334-residue protein sequence, read N- to C-terminus: NmrA-like family domain-containing oxidoreductase lnaB (334 aa).

NADP(+) is bound by residues 12 to 17 (GGTGKQ), 38 to 42 (RNAQS), 59 to 60 (DG), 80 to 82 (INS), Lys138, and 162 to 165 (FLEN).

It belongs to the NmrA-type oxidoreductase family.

The protein operates within secondary metabolite biosynthesis. NmrA-like family domain-containing oxidoreductase; part of the lna gene cluster that mediates the biosynthesis of diastereomeric piperazines. Lna and lnb clusters encode sets of enzymes that produce overlapping sets of previously undescribed metabolites such as piperazinomycin-like metabolites or morpholine. The lna and lnb biosynthetic pathways appear to be part of a signaling network that controls the formation of sclerotia, a resilient overwintering structure. One primary function of the non-canonical nonribosomal peptide synthetases lnaA and lnbA consists in the reduction of L-tyrosine. The presence in the clusters of tailoring enzymes such as the oxidoreductases lnaB, lnbB, lnaE or lnbE, as well as of the cytochrome P450 monooxygenases lnaC, lnaD, or lnbC, might explain formation of various diastereomeric piperazines. This Aspergillus flavus (strain ATCC 200026 / FGSC A1120 / IAM 13836 / NRRL 3357 / JCM 12722 / SRRC 167) protein is NmrA-like family domain-containing oxidoreductase lnaB.